Consider the following 426-residue polypeptide: uncharacterized protein (426 aa).

Solcar repeat units follow at residues 125–216, 226–315, and 334–422; these read KNNV…MKRV, HSPL…LKRT, and PNGL…CKKW. 6 helical membrane-spanning segments follow: residues 130 to 151, 193 to 213, 229 to 249, 290 to 310, 336 to 356, and 394 to 415; these read YFISGGIAGIVSRTCTAPLDRL, GINVLKVMPESSIKFGTYEAM, LYSYLAGGMAGSVAQMFIYPV, GVLVGILGMFPYSATDLGTFE, GLVMAFGALSGSTGATIVFPL, and LYKGLSPNLLKVAPSVAISYLV.

Belongs to the mitochondrial carrier (TC 2.A.29) family.

It is found in the mitochondrion inner membrane. This is an uncharacterized protein from Schizosaccharomyces pombe (strain 972 / ATCC 24843) (Fission yeast).